We begin with the raw amino-acid sequence, 173 residues long: Invasion protein B homolog BruAb1_0366 (173 aa).

The first 23 residues, 1 to 23 (MKNYRAIGLAFTFTALSSLSAFA), serve as a signal peptide directing secretion.

This sequence belongs to the IalB family.

The chain is Invasion protein B homolog BruAb1_0366 from Brucella abortus biovar 1 (strain 9-941).